A 188-amino-acid chain; its full sequence is Elongation factor P (188 aa).

The protein belongs to the elongation factor P family.

It localises to the cytoplasm. The protein operates within protein biosynthesis; polypeptide chain elongation. Involved in peptide bond synthesis. Stimulates efficient translation and peptide-bond synthesis on native or reconstituted 70S ribosomes in vitro. Probably functions indirectly by altering the affinity of the ribosome for aminoacyl-tRNA, thus increasing their reactivity as acceptors for peptidyl transferase. In Rickettsia akari (strain Hartford), this protein is Elongation factor P.